The sequence spans 257 residues: Zinc uptake system ATP-binding protein ZurA (257 aa).

In terms of domain architecture, ABC transporter spans 5–241 (IEVNNVSYHY…ADRELEILAE (237 aa)). 37–44 (GPNGSGKS) contributes to the ATP binding site.

This sequence belongs to the ABC transporter superfamily.

Involved in a zinc uptake transport system. The sequence is that of Zinc uptake system ATP-binding protein ZurA (zurA) from Listeria monocytogenes serovar 1/2a (strain ATCC BAA-679 / EGD-e).